Consider the following 101-residue polypeptide: Small ribosomal subunit protein bS18c (101 aa).

Belongs to the bacterial ribosomal protein bS18 family. As to quaternary structure, part of the 30S ribosomal subunit.

It is found in the plastid. The protein resides in the chloroplast. The polypeptide is Small ribosomal subunit protein bS18c (Solanum bulbocastanum (Wild potato)).